Consider the following 391-residue polypeptide: Apolipoprotein A-IV (391 aa).

The signal sequence occupies residues 1–20; that stretch reads MFLKAVVLTVALVAITGTQA. Tandem repeats lie at residues 33 to 54, 60 to 81, 82 to 103, 115 to 136, 137 to 158, 159 to 180, 181 to 202, 203 to 224, 225 to 246, 247 to 268, 269 to 286, 287 to 308, and 309 to 330. The interval 33–330 is 13 X 22 AA approximate tandem repeats; sequence DYFTQLSNNA…QMEKFRQQLG (298 aa). Serine 333 carries the post-translational modification Phosphoserine. The interval 354-391 is disordered; sequence FMSTLQKKGSPDQPLALPLPEQVQEQVQEQVQPKPLES. Low complexity predominate over residues 371 to 391; sequence PLPEQVQEQVQEQVQPKPLES.

It belongs to the apolipoprotein A1/A4/E family. As to quaternary structure, homodimer. As to expression, secreted in plasma.

It is found in the secreted. In terms of biological role, may have a role in chylomicrons and VLDL secretion and catabolism. Required for efficient activation of lipoprotein lipase by ApoC-II; potent activator of LCAT. Apoa-IV is a major component of HDL and chylomicrons. This chain is Apolipoprotein A-IV (Apoa4), found in Rattus norvegicus (Rat).